The sequence spans 340 residues: Coproporphyrin III ferrochelatase (340 aa).

The Fe-coproporphyrin III site is built by Ser52 and Tyr116. Residues His172 and Glu255 each coordinate Fe(2+).

Belongs to the ferrochelatase family.

It is found in the cytoplasm. It catalyses the reaction Fe-coproporphyrin III + 2 H(+) = coproporphyrin III + Fe(2+). The protein operates within porphyrin-containing compound metabolism; protoheme biosynthesis. Involved in coproporphyrin-dependent heme b biosynthesis. Catalyzes the insertion of ferrous iron into coproporphyrin III to form Fe-coproporphyrin III. This is Coproporphyrin III ferrochelatase from Mycobacterium marinum (strain ATCC BAA-535 / M).